Consider the following 295-residue polypeptide: MEQFRNVGIIGRLGSTRVLETVRRLKRFLIDRHLHVILEDTIADVLPGHGLQTSSRKMLGEVCDLVIVVGGDGSMLGAARALARHKVPVLGINRGSLGFLTDIRPDELELKVAQVLEGQYLTENRFLLEAEVRRQGEAIGQGDALNDVVLHPGKSTRMIEFELYIDGQFVCSQKADGLIVATPTGSTAYALSAGGPIMHPKLDAIVVVPMYPHTLSSRPIVVDGNSELKVVVSPDMTIYPQVSCDGQNHFTCAPGDTLHVAKKAQKLRLIHPLDHNYYEVCRTKLGWGSRLGGHD.

Asp72 acts as the Proton acceptor in catalysis. NAD(+) contacts are provided by residues 72–73 (DG), 146–147 (ND), Arg157, Lys174, Asp176, 187–192 (TAYALS), and Gln247.

This sequence belongs to the NAD kinase family. It depends on a divalent metal cation as a cofactor.

It localises to the cytoplasm. It catalyses the reaction NAD(+) + ATP = ADP + NADP(+) + H(+). Involved in the regulation of the intracellular balance of NAD and NADP, and is a key enzyme in the biosynthesis of NADP. Catalyzes specifically the phosphorylation on 2'-hydroxyl of the adenosine moiety of NAD to yield NADP. This chain is NAD kinase, found in Ectopseudomonas mendocina (strain ymp) (Pseudomonas mendocina).